A 355-amino-acid chain; its full sequence is uncharacterized protein (355 aa).

The chain crosses the membrane as a helical span at residues 6-26 (LLTPYFLLSILSVGVFTATAA).

The protein belongs to the SUN family.

Its subcellular location is the membrane. This is an uncharacterized protein from Saccharomyces cerevisiae (strain ATCC 204508 / S288c) (Baker's yeast).